A 69-amino-acid polypeptide reads, in one-letter code: Putative F-box protein At2g33705 (69 aa).

Positions 14 to 59 (GVNLEQIPYDLVLEILLKLSAKSIARFRCVSKLWDSTFRSRYFTEL) constitute an F-box domain.

The sequence is that of Putative F-box protein At2g33705 from Arabidopsis thaliana (Mouse-ear cress).